The following is a 282-amino-acid chain: 3-methyl-2-oxobutanoate hydroxymethyltransferase (282 aa).

Mg(2+)-binding residues include aspartate 44 and aspartate 83. Residues 44-45 (DS), aspartate 83, and lysine 113 each bind 3-methyl-2-oxobutanoate. Glutamate 115 is a binding site for Mg(2+). The Proton acceptor role is filled by glutamate 182.

This sequence belongs to the PanB family. As to quaternary structure, homodecamer; pentamer of dimers. It depends on Mg(2+) as a cofactor.

It localises to the cytoplasm. The catalysed reaction is 3-methyl-2-oxobutanoate + (6R)-5,10-methylene-5,6,7,8-tetrahydrofolate + H2O = 2-dehydropantoate + (6S)-5,6,7,8-tetrahydrofolate. It participates in cofactor biosynthesis; (R)-pantothenate biosynthesis; (R)-pantoate from 3-methyl-2-oxobutanoate: step 1/2. Catalyzes the reversible reaction in which hydroxymethyl group from 5,10-methylenetetrahydrofolate is transferred onto alpha-ketoisovalerate to form ketopantoate. The sequence is that of 3-methyl-2-oxobutanoate hydroxymethyltransferase from Dehalococcoides mccartyi (strain ATCC BAA-2266 / KCTC 15142 / 195) (Dehalococcoides ethenogenes (strain 195)).